Consider the following 193-residue polypeptide: Dual-action ribosomal maturation protein DarP (193 aa).

The segment covering 1 to 10 has biased composition (basic and acidic residues); sequence MRGRDEDTGE. 2 disordered regions span residues 1–20 and 171–193; these read MRGRDEDTGEFRGASRSQQR and QEQGLESGDSGLEDGESALEDDE. Over residues 181–193 the composition is skewed to acidic residues; the sequence is GLEDGESALEDDE.

This sequence belongs to the DarP family.

It localises to the cytoplasm. Its function is as follows. Member of a network of 50S ribosomal subunit biogenesis factors which assembles along the 30S-50S interface, preventing incorrect 23S rRNA structures from forming. Promotes peptidyl transferase center (PTC) maturation. This chain is Dual-action ribosomal maturation protein DarP, found in Xanthomonas oryzae pv. oryzae (strain MAFF 311018).